The primary structure comprises 72 residues: uncharacterized protein (72 aa).

The protein resides in the plastid. Its subcellular location is the chloroplast. This is an uncharacterized protein from Oenothera berteroana (Bertero's evening primrose).